The primary structure comprises 124 residues: Large ribosomal subunit protein bL12 (124 aa).

Belongs to the bacterial ribosomal protein bL12 family. As to quaternary structure, homodimer. Part of the ribosomal stalk of the 50S ribosomal subunit. Forms a multimeric L10(L12)X complex, where L10 forms an elongated spine to which 2 to 4 L12 dimers bind in a sequential fashion. Binds GTP-bound translation factors.

In terms of biological role, forms part of the ribosomal stalk which helps the ribosome interact with GTP-bound translation factors. Is thus essential for accurate translation. This Paracoccus denitrificans (strain Pd 1222) protein is Large ribosomal subunit protein bL12.